Reading from the N-terminus, the 242-residue chain is MKENIKRVLPFLLVLLFAFAPLALASAPVDAPAPADAPADALPSAKVISAPADAGVIEAVELEHATVTGAHDVAVAHVADSLSHEKLMDLFWRVLNFAVLMAILIKFGAKPIANALSGRQQRVKSEVEDLEARRIVAEKEFRQFEAKLANVEKDIDSIVDKAVAQAEIEKAKILERAEQAAADIQKSAEQAIQNEIANAKRSLKNDAADQAAVMAEELIVKHLTADDQVKIVEDYLAKVGAV.

A run of 2 helical transmembrane segments spans residues 8 to 28 and 87 to 107; these read VLPF…ASAP and LMDL…LIKF.

The protein belongs to the ATPase B chain family. As to quaternary structure, F-type ATPases have 2 components, F(1) - the catalytic core - and F(0) - the membrane proton channel. F(1) has five subunits: alpha(3), beta(3), gamma(1), delta(1), epsilon(1). F(0) has three main subunits: a(1), b(2) and c(10-14). The alpha and beta chains form an alternating ring which encloses part of the gamma chain. F(1) is attached to F(0) by a central stalk formed by the gamma and epsilon chains, while a peripheral stalk is formed by the delta and b chains.

The protein resides in the cell inner membrane. F(1)F(0) ATP synthase produces ATP from ADP in the presence of a proton or sodium gradient. F-type ATPases consist of two structural domains, F(1) containing the extramembraneous catalytic core and F(0) containing the membrane proton channel, linked together by a central stalk and a peripheral stalk. During catalysis, ATP synthesis in the catalytic domain of F(1) is coupled via a rotary mechanism of the central stalk subunits to proton translocation. Functionally, component of the F(0) channel, it forms part of the peripheral stalk, linking F(1) to F(0). The protein is ATP synthase subunit b of Desulfotalea psychrophila (strain LSv54 / DSM 12343).